The following is a 196-amino-acid chain: ATP-dependent Clp protease proteolytic subunit (196 aa).

The active-site Nucleophile is the Ser99. The active site involves His124.

This sequence belongs to the peptidase S14 family. Fourteen ClpP subunits assemble into 2 heptameric rings which stack back to back to give a disk-like structure with a central cavity, resembling the structure of eukaryotic proteasomes.

Its subcellular location is the cytoplasm. The enzyme catalyses Hydrolysis of proteins to small peptides in the presence of ATP and magnesium. alpha-casein is the usual test substrate. In the absence of ATP, only oligopeptides shorter than five residues are hydrolyzed (such as succinyl-Leu-Tyr-|-NHMec, and Leu-Tyr-Leu-|-Tyr-Trp, in which cleavage of the -Tyr-|-Leu- and -Tyr-|-Trp bonds also occurs).. Functionally, cleaves peptides in various proteins in a process that requires ATP hydrolysis. Has a chymotrypsin-like activity. Plays a major role in the degradation of misfolded proteins. This Helicobacter hepaticus (strain ATCC 51449 / 3B1) protein is ATP-dependent Clp protease proteolytic subunit.